A 504-amino-acid chain; its full sequence is Galactose/methyl galactoside import ATP-binding protein MglA (504 aa).

ABC transporter domains lie at 8 to 247 and 258 to 504; these read LEMN…VGRD and TPGE…TRFI. 40-47 contacts ATP; it reads GENGAGKS.

It belongs to the ABC transporter superfamily. Galactose/methyl galactoside importer (TC 3.A.1.2.3) family. In terms of assembly, the complex is composed of one ATP-binding protein (MglA), two transmembrane proteins (MglC) and a solute-binding protein (MglB).

The protein localises to the cell membrane. The enzyme catalyses D-galactose(out) + ATP + H2O = D-galactose(in) + ADP + phosphate + H(+). It carries out the reaction methyl beta-D-galactoside(out) + ATP + H2O = methyl beta-D-galactoside(in) + ADP + phosphate + H(+). Functionally, part of the ABC transporter complex MglABC involved in galactose/methyl galactoside import. Responsible for energy coupling to the transport system. This Clostridium tetani (strain Massachusetts / E88) protein is Galactose/methyl galactoside import ATP-binding protein MglA.